The following is a 313-amino-acid chain: Ribose-phosphate pyrophosphokinase (313 aa).

Residues 37-39 (DGE) and 96-97 (RQ) each bind ATP. The Mg(2+) site is built by His131 and Asp170. Lys193 is an active-site residue. D-ribose 5-phosphate-binding positions include Arg195, Asp219, and 223 to 227 (DTAGT).

This sequence belongs to the ribose-phosphate pyrophosphokinase family. Class I subfamily. In terms of assembly, homohexamer. It depends on Mg(2+) as a cofactor.

Its subcellular location is the cytoplasm. The catalysed reaction is D-ribose 5-phosphate + ATP = 5-phospho-alpha-D-ribose 1-diphosphate + AMP + H(+). It participates in metabolic intermediate biosynthesis; 5-phospho-alpha-D-ribose 1-diphosphate biosynthesis; 5-phospho-alpha-D-ribose 1-diphosphate from D-ribose 5-phosphate (route I): step 1/1. In terms of biological role, involved in the biosynthesis of the central metabolite phospho-alpha-D-ribosyl-1-pyrophosphate (PRPP) via the transfer of pyrophosphoryl group from ATP to 1-hydroxyl of ribose-5-phosphate (Rib-5-P). The sequence is that of Ribose-phosphate pyrophosphokinase from Pseudomonas aeruginosa (strain ATCC 15692 / DSM 22644 / CIP 104116 / JCM 14847 / LMG 12228 / 1C / PRS 101 / PAO1).